The following is a 314-amino-acid chain: Elongation factor Ts (314 aa).

Residues 82 to 85 are involved in Mg(2+) ion dislocation from EF-Tu; sequence TDFV.

Belongs to the EF-Ts family.

It localises to the cytoplasm. In terms of biological role, associates with the EF-Tu.GDP complex and induces the exchange of GDP to GTP. It remains bound to the aminoacyl-tRNA.EF-Tu.GTP complex up to the GTP hydrolysis stage on the ribosome. In Nostoc punctiforme (strain ATCC 29133 / PCC 73102), this protein is Elongation factor Ts.